A 600-amino-acid polypeptide reads, in one-letter code: Cytidine monophosphate-N-acetylneuraminic acid hydroxylase (600 aa).

The Rieske domain maps to 9–107 (LSPVEVASLK…VEMDENNRLL (99 aa)). Residues Cys-49, His-51, Cys-70, and His-73 each coordinate [2Fe-2S] cluster.

Belongs to the CMP-Neu5Ac hydroxylase family. It depends on [2Fe-2S] cluster as a cofactor.

It is found in the cytoplasm. It catalyses the reaction CMP-N-acetyl-beta-neuraminate + 2 Fe(II)-[cytochrome b5] + O2 + 2 H(+) = CMP-N-glycoloyl-beta-neuraminate + 2 Fe(III)-[cytochrome b5] + H2O. Its pathway is amino-sugar metabolism; N-acetylneuraminate metabolism. In terms of biological role, sialic acids are components of carbohydrate chains of glycoconjugates and are involved in cell-cell recognition and cell-pathogen interactions. Catalyzes the conversion of CMP-N-acetylneuraminic acid (CMP-Neu5Ac) into its hydroxylated derivative CMP-N-glycolylneuraminic acid (CMP-Neu5Gc), a sialic acid abundantly expressed at the surface of many cells. The sequence is that of Cytidine monophosphate-N-acetylneuraminic acid hydroxylase (CMAH) from Gorilla gorilla gorilla (Western lowland gorilla).